A 191-amino-acid polypeptide reads, in one-letter code: Pyridoxal 5'-phosphate synthase subunit PdxT (191 aa).

46 to 48 is a binding site for L-glutamine; that stretch reads GES. The active-site Nucleophile is Cys75. Residues Arg101 and 129–130 each bind L-glutamine; that span reads IR. Residues His165 and Glu167 each act as charge relay system in the active site.

This sequence belongs to the glutaminase PdxT/SNO family. As to quaternary structure, in the presence of PdxS, forms a dodecamer of heterodimers. Only shows activity in the heterodimer.

The enzyme catalyses aldehydo-D-ribose 5-phosphate + D-glyceraldehyde 3-phosphate + L-glutamine = pyridoxal 5'-phosphate + L-glutamate + phosphate + 3 H2O + H(+). It carries out the reaction L-glutamine + H2O = L-glutamate + NH4(+). Its pathway is cofactor biosynthesis; pyridoxal 5'-phosphate biosynthesis. Its function is as follows. Catalyzes the hydrolysis of glutamine to glutamate and ammonia as part of the biosynthesis of pyridoxal 5'-phosphate. The resulting ammonia molecule is channeled to the active site of PdxS. This Staphylococcus saprophyticus subsp. saprophyticus (strain ATCC 15305 / DSM 20229 / NCIMB 8711 / NCTC 7292 / S-41) protein is Pyridoxal 5'-phosphate synthase subunit PdxT.